Consider the following 151-residue polypeptide: SsrA-binding protein (151 aa).

The protein belongs to the SmpB family.

Its subcellular location is the cytoplasm. Required for rescue of stalled ribosomes mediated by trans-translation. Binds to transfer-messenger RNA (tmRNA), required for stable association of tmRNA with ribosomes. tmRNA and SmpB together mimic tRNA shape, replacing the anticodon stem-loop with SmpB. tmRNA is encoded by the ssrA gene; the 2 termini fold to resemble tRNA(Ala) and it encodes a 'tag peptide', a short internal open reading frame. During trans-translation Ala-aminoacylated tmRNA acts like a tRNA, entering the A-site of stalled ribosomes, displacing the stalled mRNA. The ribosome then switches to translate the ORF on the tmRNA; the nascent peptide is terminated with the 'tag peptide' encoded by the tmRNA and targeted for degradation. The ribosome is freed to recommence translation, which seems to be the essential function of trans-translation. The sequence is that of SsrA-binding protein from Campylobacter concisus (strain 13826).